Here is a 22-residue protein sequence, read N- to C-terminus: Phospholipase A2 (22 aa).

This sequence belongs to the phospholipase A2 family. Group II subfamily. It depends on Ca(2+) as a cofactor. Seven disulfide bonds are present. In terms of tissue distribution, expressed by the venom gland.

It localises to the secreted. It carries out the reaction a 1,2-diacyl-sn-glycero-3-phosphocholine + H2O = a 1-acyl-sn-glycero-3-phosphocholine + a fatty acid + H(+). Snake venom phospholipase A2 (PLA2) that inhibits neuromuscular transmission by blocking acetylcholine release from the nerve termini. PLA2 catalyzes the calcium-dependent hydrolysis of the 2-acyl groups in 3-sn-phosphoglycerides. The protein is Phospholipase A2 of Daboia siamensis (Eastern Russel's viper).